A 295-amino-acid chain; its full sequence is ATP synthase gamma chain (295 aa).

The protein belongs to the ATPase gamma chain family. In terms of assembly, F-type ATPases have 2 components, CF(1) - the catalytic core - and CF(0) - the membrane proton channel. CF(1) has five subunits: alpha(3), beta(3), gamma(1), delta(1), epsilon(1). CF(0) has three main subunits: a, b and c.

It is found in the cell membrane. Its function is as follows. Produces ATP from ADP in the presence of a proton gradient across the membrane. The gamma chain is believed to be important in regulating ATPase activity and the flow of protons through the CF(0) complex. This chain is ATP synthase gamma chain, found in Caldanaerobacter subterraneus subsp. tengcongensis (strain DSM 15242 / JCM 11007 / NBRC 100824 / MB4) (Thermoanaerobacter tengcongensis).